A 291-amino-acid chain; its full sequence is 33 kDa chaperonin (291 aa).

Cystine bridges form between Cys-237/Cys-239 and Cys-270/Cys-273.

Belongs to the HSP33 family. In terms of processing, under oxidizing conditions two disulfide bonds are formed involving the reactive cysteines. Under reducing conditions zinc is bound to the reactive cysteines and the protein is inactive.

The protein localises to the cytoplasm. Its function is as follows. Redox regulated molecular chaperone. Protects both thermally unfolding and oxidatively damaged proteins from irreversible aggregation. Plays an important role in the bacterial defense system toward oxidative stress. This chain is 33 kDa chaperonin, found in Bacillus anthracis (strain A0248).